A 341-amino-acid chain; its full sequence is N-acetyl-gamma-glutamyl-phosphate reductase (341 aa).

C146 is an active-site residue.

This sequence belongs to the NAGSA dehydrogenase family. Type 1 subfamily.

The protein localises to the cytoplasm. It catalyses the reaction N-acetyl-L-glutamate 5-semialdehyde + phosphate + NADP(+) = N-acetyl-L-glutamyl 5-phosphate + NADPH + H(+). Its pathway is amino-acid biosynthesis; L-arginine biosynthesis; N(2)-acetyl-L-ornithine from L-glutamate: step 3/4. Its function is as follows. Catalyzes the NADPH-dependent reduction of N-acetyl-5-glutamyl phosphate to yield N-acetyl-L-glutamate 5-semialdehyde. The protein is N-acetyl-gamma-glutamyl-phosphate reductase of Limosilactobacillus fermentum (strain NBRC 3956 / LMG 18251) (Lactobacillus fermentum).